Reading from the N-terminus, the 385-residue chain is Meiotic recombination protein SPO11-2 (385 aa).

Residues 24-169 enclose the Topo IIA-type catalytic domain; the sequence is LPPAEVRARI…LGIMASSRGA (146 aa). The O-(5'-phospho-DNA)-tyrosine intermediate role is filled by Tyr126. Residues Glu219 and Asp272 each contribute to the Mg(2+) site.

Belongs to the TOP6A family. As to quaternary structure, interacts with TOP6B. The cofactor is Mg(2+).

It is found in the nucleus. The enzyme catalyses ATP-dependent breakage, passage and rejoining of double-stranded DNA.. In terms of biological role, required for meiotic recombination. Mediates DNA cleavage that forms the double-strand breaks (DSB) that initiate meiotic recombination. This is Meiotic recombination protein SPO11-2 (SPO11-2) from Oryza sativa subsp. japonica (Rice).